We begin with the raw amino-acid sequence, 294 residues long: Bifunctional protein FolD (294 aa).

NADP(+) is bound by residues 166-168 (GRS), S191, and I232.

Belongs to the tetrahydrofolate dehydrogenase/cyclohydrolase family. Homodimer.

It catalyses the reaction (6R)-5,10-methylene-5,6,7,8-tetrahydrofolate + NADP(+) = (6R)-5,10-methenyltetrahydrofolate + NADPH. It carries out the reaction (6R)-5,10-methenyltetrahydrofolate + H2O = (6R)-10-formyltetrahydrofolate + H(+). It functions in the pathway one-carbon metabolism; tetrahydrofolate interconversion. Functionally, catalyzes the oxidation of 5,10-methylenetetrahydrofolate to 5,10-methenyltetrahydrofolate and then the hydrolysis of 5,10-methenyltetrahydrofolate to 10-formyltetrahydrofolate. The polypeptide is Bifunctional protein FolD (Bradyrhizobium diazoefficiens (strain JCM 10833 / BCRC 13528 / IAM 13628 / NBRC 14792 / USDA 110)).